Reading from the N-terminus, the 955-residue chain is RNA polymerase-associated protein RapA (955 aa).

The Helicase ATP-binding domain maps to 163–333; the sequence is EVGHRYAPRV…FARLRLLDPE (171 aa). 176–183 serves as a coordination point for ATP; sequence DEVGLGKT. Positions 279–282 match the DEAH box motif; that stretch reads DEAH. A Helicase C-terminal domain is found at 478-642; the sequence is RVEWLLELLL…AVRDELFELL (165 aa).

Belongs to the SNF2/RAD54 helicase family. RapA subfamily. In terms of assembly, interacts with the RNAP. Has a higher affinity for the core RNAP than for the holoenzyme. Its ATPase activity is stimulated by binding to RNAP.

Functionally, transcription regulator that activates transcription by stimulating RNA polymerase (RNAP) recycling in case of stress conditions such as supercoiled DNA or high salt concentrations. Probably acts by releasing the RNAP, when it is trapped or immobilized on tightly supercoiled DNA. Does not activate transcription on linear DNA. Probably not involved in DNA repair. This chain is RNA polymerase-associated protein RapA, found in Aeromonas hydrophila subsp. hydrophila (strain ATCC 7966 / DSM 30187 / BCRC 13018 / CCUG 14551 / JCM 1027 / KCTC 2358 / NCIMB 9240 / NCTC 8049).